Consider the following 338-residue polypeptide: N-acetylmuramate/N-acetylglucosamine kinase (338 aa).

It belongs to the kinase AmgK family.

It catalyses the reaction N-acetyl-D-muramate + ATP = N-acetyl-alpha-D-muramate 1-phosphate + ADP + H(+). The enzyme catalyses N-acetyl-D-glucosamine + ATP = N-acetyl-alpha-D-glucosamine 1-phosphate + ADP + H(+). Its pathway is cell wall biogenesis; peptidoglycan recycling. Its function is as follows. Sugar kinase that catalyzes the ATP-dependent phosphorylation of N-acetylmuramate (MurNAc) and N-acetylglucosamine (GlcNAc) at its C1 hydroxyl group, leading to MurNAc alpha-1P and GlcNAc alpha-1P, respectively. Is involved in peptidoglycan recycling as part of a cell wall recycling pathway that bypasses de novo biosynthesis of the peptidoglycan precursor UDP-MurNAc. Plays a role in intrinsic resistance to fosfomycin, which targets the de novo synthesis of UDP-MurNAc. This chain is N-acetylmuramate/N-acetylglucosamine kinase, found in Pseudomonas aeruginosa (strain ATCC 15692 / DSM 22644 / CIP 104116 / JCM 14847 / LMG 12228 / 1C / PRS 101 / PAO1).